The following is a 203-amino-acid chain: ATP-dependent Clp protease proteolytic subunit (203 aa).

S107 functions as the Nucleophile in the catalytic mechanism. The active site involves H132.

It belongs to the peptidase S14 family. As to quaternary structure, fourteen ClpP subunits assemble into 2 heptameric rings which stack back to back to give a disk-like structure with a central cavity, resembling the structure of eukaryotic proteasomes.

The protein localises to the cytoplasm. The catalysed reaction is Hydrolysis of proteins to small peptides in the presence of ATP and magnesium. alpha-casein is the usual test substrate. In the absence of ATP, only oligopeptides shorter than five residues are hydrolyzed (such as succinyl-Leu-Tyr-|-NHMec, and Leu-Tyr-Leu-|-Tyr-Trp, in which cleavage of the -Tyr-|-Leu- and -Tyr-|-Trp bonds also occurs).. In terms of biological role, cleaves peptides in various proteins in a process that requires ATP hydrolysis. Has a chymotrypsin-like activity. Plays a major role in the degradation of misfolded proteins. The sequence is that of ATP-dependent Clp protease proteolytic subunit from Shewanella loihica (strain ATCC BAA-1088 / PV-4).